Consider the following 289-residue polypeptide: Spore coat polysaccharide biosynthesis protein SpsD (289 aa).

The N-acetyltransferase domain maps to 137–289 (FELGPPEPGD…YHIWPGKEAK (153 aa)).

The protein operates within spore coat biogenesis; spore coat polysaccharide biosynthesis. This is Spore coat polysaccharide biosynthesis protein SpsD (spsD) from Bacillus subtilis (strain 168).